The chain runs to 253 residues: Sulfate transporter CysZ (253 aa).

A run of 4 helical transmembrane segments spans residues 31-51, 75-95, 151-171, and 222-242; these read FVIL…WWLF, LLWP…FSTI, IVLL…PVLW, and IPLL…AMWV.

Belongs to the CysZ family.

It is found in the cell inner membrane. Functionally, high affinity, high specificity proton-dependent sulfate transporter, which mediates sulfate uptake. Provides the sulfur source for the cysteine synthesis pathway. The polypeptide is Sulfate transporter CysZ (Shigella flexneri).